Consider the following 274-residue polypeptide: NH(3)-dependent NAD(+) synthetase (274 aa).

46 to 53 (GISGGQDS) provides a ligand contact to ATP. Aspartate 52 provides a ligand contact to Mg(2+). Arginine 140 contributes to the deamido-NAD(+) binding site. Threonine 160 lines the ATP pocket. Glutamate 165 contributes to the Mg(2+) binding site. The deamido-NAD(+) site is built by lysine 173 and aspartate 180. 2 residues coordinate ATP: lysine 189 and threonine 211. Deamido-NAD(+) is bound at residue 260-261 (HK).

Belongs to the NAD synthetase family. In terms of assembly, homodimer.

The catalysed reaction is deamido-NAD(+) + NH4(+) + ATP = AMP + diphosphate + NAD(+) + H(+). Its pathway is cofactor biosynthesis; NAD(+) biosynthesis; NAD(+) from deamido-NAD(+) (ammonia route): step 1/1. Catalyzes the ATP-dependent amidation of deamido-NAD to form NAD. Uses ammonia as a nitrogen source. This Streptococcus mutans serotype c (strain ATCC 700610 / UA159) protein is NH(3)-dependent NAD(+) synthetase.